Reading from the N-terminus, the 541-residue chain is Zinc finger protein 503 (541 aa).

The segment covering 1–18 (MSNSPLGSGSRISHFTTE) has biased composition (polar residues). Disordered stretches follow at residues 1–49 (MSNS…QAGR) and 97–255 (TCSQ…SSSV). Basic and acidic residues predominate over residues 137–157 (AEDKSSFKPYSKHPDKKDQSA). Residues 236 to 255 (SLSAAPSPTPASSSSSSSSV) are compositionally biased toward low complexity. The segment at 411 to 439 (HVCNWVSATGPCDKRFSSSEELLGHLRTH) adopts a C2H2-type zinc-finger fold. Positions 474-511 (GASPGPLTLRSPHHHPLGLSSSRYHPYSKSPLPSGGAP) are disordered.

The protein belongs to the Elbow/Noc family.

It is found in the nucleus. In terms of biological role, may function as a transcriptional repressor. In Xenopus tropicalis (Western clawed frog), this protein is Zinc finger protein 503 (znf503).